Here is a 282-residue protein sequence, read N- to C-terminus: Pantothenate synthetase (282 aa).

30–37 (MGNLHDGH) serves as a coordination point for ATP. His-37 acts as the Proton donor in catalysis. Gln-61 is a binding site for (R)-pantoate. A beta-alanine-binding site is contributed by Gln-61. Residue 149 to 152 (GNKD) participates in ATP binding. A (R)-pantoate-binding site is contributed by Gln-155. Residues Ala-178 and 186–189 (MSSR) each bind ATP.

Belongs to the pantothenate synthetase family. As to quaternary structure, homodimer.

The protein localises to the cytoplasm. The enzyme catalyses (R)-pantoate + beta-alanine + ATP = (R)-pantothenate + AMP + diphosphate + H(+). The protein operates within cofactor biosynthesis; (R)-pantothenate biosynthesis; (R)-pantothenate from (R)-pantoate and beta-alanine: step 1/1. Its function is as follows. Catalyzes the condensation of pantoate with beta-alanine in an ATP-dependent reaction via a pantoyl-adenylate intermediate. The protein is Pantothenate synthetase of Marinomonas sp. (strain MWYL1).